Consider the following 34-residue polypeptide: Photosystem I reaction center subunit XII (34 aa).

The helical transmembrane segment at 10-32 (VFVALVVAAHAAVLALRLSISLY) threads the bilayer.

Belongs to the PsaM family.

It is found in the cellular thylakoid membrane. The chain is Photosystem I reaction center subunit XII from Parasynechococcus marenigrum (strain WH8102).